The sequence spans 216 residues: 3-isopropylmalate dehydratase small subunit (216 aa).

Belongs to the LeuD family. LeuD type 1 subfamily. Heterodimer of LeuC and LeuD.

The enzyme catalyses (2R,3S)-3-isopropylmalate = (2S)-2-isopropylmalate. It functions in the pathway amino-acid biosynthesis; L-leucine biosynthesis; L-leucine from 3-methyl-2-oxobutanoate: step 2/4. In terms of biological role, catalyzes the isomerization between 2-isopropylmalate and 3-isopropylmalate, via the formation of 2-isopropylmaleate. This is 3-isopropylmalate dehydratase small subunit from Cupriavidus pinatubonensis (strain JMP 134 / LMG 1197) (Cupriavidus necator (strain JMP 134)).